Reading from the N-terminus, the 103-residue chain is UPF0145 protein EF_0241 (103 aa).

Belongs to the UPF0145 family.

The sequence is that of UPF0145 protein EF_0241 from Enterococcus faecalis (strain ATCC 700802 / V583).